The primary structure comprises 433 residues: Zinc finger protein CONSTANS-LIKE 15 (433 aa).

The Zn(2+) site is built by Cys9, Cys12, Cys32, His37, Cys52, Cys55, Cys75, and His80. The segment at 9–51 (CDFCGERTAVLFCRADTAKLCLPCDQQVHTANLLSRKHVRSQI) adopts a B box-type 1; atypical zinc-finger fold. Residues 52–94 (CDNCGNEPVSVRCFTDNLILCQECDWDVHGSCSVSDAHVRSAV) form a B box-type 2; atypical zinc finger. Positions 319 to 353 (DDYKRSTSGQVQPTKSESNNRPITFGSEKGSNSSS) are disordered. Polar residues predominate over residues 324-340 (STSGQVQPTKSESNNRP). Positions 374–398 (TKADLERLAQNRGDAMQRYKEKRKT) form a coiled coil. Residues 385–427 (RGDAMQRYKEKRKTRRYDKTIRYESRKARADTRLRVRGRFVKA) form the CCT domain.

The protein belongs to the CONSTANS family.

The protein localises to the nucleus. The sequence is that of Zinc finger protein CONSTANS-LIKE 15 (COL15) from Arabidopsis thaliana (Mouse-ear cress).